Consider the following 544-residue polypeptide: Chaperonin GroEL (544 aa).

ATP-binding positions include 30–33 (TLGP), K51, 87–91 (DGTTT), G415, and D495.

The protein belongs to the chaperonin (HSP60) family. As to quaternary structure, forms a cylinder of 14 subunits composed of two heptameric rings stacked back-to-back. Interacts with the co-chaperonin GroES.

Its subcellular location is the cytoplasm. The catalysed reaction is ATP + H2O + a folded polypeptide = ADP + phosphate + an unfolded polypeptide.. In terms of biological role, together with its co-chaperonin GroES, plays an essential role in assisting protein folding. The GroEL-GroES system forms a nano-cage that allows encapsulation of the non-native substrate proteins and provides a physical environment optimized to promote and accelerate protein folding. The protein is Chaperonin GroEL of Neisseria flavescens.